We begin with the raw amino-acid sequence, 280 residues long: Bifunctional protein FolD (280 aa).

Residues 166–168 (GRS) and Ser-191 contribute to the NADP(+) site.

The protein belongs to the tetrahydrofolate dehydrogenase/cyclohydrolase family. In terms of assembly, homodimer.

It carries out the reaction (6R)-5,10-methylene-5,6,7,8-tetrahydrofolate + NADP(+) = (6R)-5,10-methenyltetrahydrofolate + NADPH. The enzyme catalyses (6R)-5,10-methenyltetrahydrofolate + H2O = (6R)-10-formyltetrahydrofolate + H(+). Its pathway is one-carbon metabolism; tetrahydrofolate interconversion. In terms of biological role, catalyzes the oxidation of 5,10-methylenetetrahydrofolate to 5,10-methenyltetrahydrofolate and then the hydrolysis of 5,10-methenyltetrahydrofolate to 10-formyltetrahydrofolate. This is Bifunctional protein FolD from Saccharophagus degradans (strain 2-40 / ATCC 43961 / DSM 17024).